An 88-amino-acid chain; its full sequence is Apolipoprotein C-I (88 aa).

The signal sequence occupies residues 1–26 (MRLILSLPVLAVVLAMVLEGPAPAQA).

Belongs to the apolipoprotein C1 family.

Its subcellular location is the secreted. In terms of biological role, inhibitor of lipoprotein binding to the low density lipoprotein (LDL) receptor, LDL receptor-related protein, and very low density lipoprotein (VLDL) receptor. Associates with high density lipoproteins (HDL) and the triacylglycerol-rich lipoproteins in the plasma and makes up about 10% of the protein of the VLDL and 2% of that of HDL. Appears to interfere directly with fatty acid uptake and is also the major plasma inhibitor of cholesteryl ester transfer protein (CETP). Binds free fatty acids and reduces their intracellular esterification. Modulates the interaction of APOE with beta-migrating VLDL and inhibits binding of beta-VLDL to the LDL receptor-related protein. The sequence is that of Apolipoprotein C-I (APOC1) from Cynopterus brachyotis (Lesser short-nosed fruit bat).